The following is a 381-amino-acid chain: UDP-4-amino-4-deoxy-L-arabinose--oxoglutarate aminotransferase (381 aa).

N6-(pyridoxal phosphate)lysine is present on lysine 182.

The protein belongs to the DegT/DnrJ/EryC1 family. ArnB subfamily. As to quaternary structure, homodimer. The cofactor is pyridoxal 5'-phosphate.

It catalyses the reaction UDP-4-amino-4-deoxy-beta-L-arabinose + 2-oxoglutarate = UDP-beta-L-threo-pentopyranos-4-ulose + L-glutamate. It participates in nucleotide-sugar biosynthesis; UDP-4-deoxy-4-formamido-beta-L-arabinose biosynthesis; UDP-4-deoxy-4-formamido-beta-L-arabinose from UDP-alpha-D-glucuronate: step 2/3. The protein operates within bacterial outer membrane biogenesis; lipopolysaccharide biosynthesis. Its function is as follows. Catalyzes the conversion of UDP-4-keto-arabinose (UDP-Ara4O) to UDP-4-amino-4-deoxy-L-arabinose (UDP-L-Ara4N). The modified arabinose is attached to lipid A and is required for resistance to polymyxin and cationic antimicrobial peptides. This Photorhabdus laumondii subsp. laumondii (strain DSM 15139 / CIP 105565 / TT01) (Photorhabdus luminescens subsp. laumondii) protein is UDP-4-amino-4-deoxy-L-arabinose--oxoglutarate aminotransferase.